A 326-amino-acid polypeptide reads, in one-letter code: N-acetyl-gamma-glutamyl-phosphate reductase (326 aa).

C155 is an active-site residue.

This sequence belongs to the NAGSA dehydrogenase family. Type 1 subfamily.

It is found in the cytoplasm. The enzyme catalyses N-acetyl-L-glutamate 5-semialdehyde + phosphate + NADP(+) = N-acetyl-L-glutamyl 5-phosphate + NADPH + H(+). It functions in the pathway amino-acid biosynthesis; L-arginine biosynthesis; N(2)-acetyl-L-ornithine from L-glutamate: step 3/4. Functionally, catalyzes the NADPH-dependent reduction of N-acetyl-5-glutamyl phosphate to yield N-acetyl-L-glutamate 5-semialdehyde. This is N-acetyl-gamma-glutamyl-phosphate reductase from Shewanella sp. (strain MR-4).